The following is a 931-amino-acid chain: Dual O-methyltransferase/FAD-dependent monooxygenase elcB (931 aa).

Residues 1–463 form an O-methyltransferase region; the sequence is MAASTGLSTV…TTDKARPNGD (463 aa). D254 contributes to the S-adenosyl-L-methionine binding site. H304 (proton acceptor) is an active-site residue. A disordered region spans residues 455 to 474; that stretch reads TDKARPNGDTTHSGQASIPN. The span at 462–474 shows a compositional bias: polar residues; the sequence is GDTTHSGQASIPN. The FAD-dependent monooxygenase stretch occupies residues 464 to 931; that stretch reads TTHSGQASIP…TFEELDVAEL (468 aa). Residues E520, R604, D836, and A849 each coordinate FAD.

In the C-terminal section; belongs to the paxM FAD-dependent monooxygenase family. This sequence in the N-terminal section; belongs to the class I-like SAM-binding methyltransferase superfamily. Cation-independent O-methyltransferase family. COMT subfamily.

The enzyme catalyses nor-toralactone + S-adenosyl-L-methionine = toralactone + S-adenosyl-L-homocysteine + H(+). The catalysed reaction is toralactone + NADH + O2 + H(+) = 1-(3,4,5-trihydroxy-7-methoxynaphthalen-2-yl)propan-2-one + CO2 + NAD(+). Its pathway is secondary metabolite biosynthesis. In terms of biological role, dual O-methyltransferase/FAD-dependent monooxygenase; part of the gene cluster that mediates the biosynthesis of elsinochrome C, a perelyenequinone phytotoxin structurally similar to cercosporin. The first step of elsinochrome C biosynthesis is performed by the polyketide synthase elcA which catalyzes the formation of nor-toralactone. The starter unit acyltransferase (SAT) domain of elcA initiates polyketide extension by the selective utilization of acetyl-CoA, which is elongated to the heptaketide in the beta-ketoacyl synthase (KS) domain by successive condensations with six malonyl units introduced by the malonyl acyltransferase (MAT) domain. The product template (PT) domain catalyzes C4-C9 and C2-C11 aldol cyclizations and dehydrations to a trihydroxynaphthalene, which is thought to be delivered to the thioesterase (TE) domain for product release. The bifunctional enzyme elcB then methylates nor-toralactone to toralactone before conducting an unusual oxidative aromatic ring opening. The next step in perylenequinone biosynthesis is an O-methylation at the nascent OH-6 of the elcB product performed by the O-methyltransferase elcD. The oxidative coupling of the two monomeric naphthol units in perylenequinone biosynthesis is catalyzed by the FAD-dependent monooxygenase elcE and the multicopper oxidase elcG. ElcG might catalyze the first intermolecular coupling in a regio- and stereo-selective manner via a phenol radical coupling mechanism and the elcE could forge the second C-C bond intramolecularly via a hydride transfer mechanism. The fasciclin domain-containing protein elcF might also play a role duting this step. The last piece of the puzzle in the biosynthesis of elsinochrome C is the additional annulation by enolate coupling to afford the dihydrobenzo(ghi)perylenequinone system, catalyzed by the FAD-dependent monooxygenase elcH. This is Dual O-methyltransferase/FAD-dependent monooxygenase elcB from Phaeosphaeria nodorum (strain SN15 / ATCC MYA-4574 / FGSC 10173) (Glume blotch fungus).